A 70-amino-acid polypeptide reads, in one-letter code: Putative peptide YY-3 (70 aa).

Residues M1 to G23 form the signal peptide.

Belongs to the NPY family.

It localises to the secreted. The sequence is that of Putative peptide YY-3 (PYY3) from Homo sapiens (Human).